Consider the following 118-residue polypeptide: Large ribosomal subunit protein uL18 (118 aa).

It belongs to the universal ribosomal protein uL18 family. In terms of assembly, part of the 50S ribosomal subunit; part of the 5S rRNA/L5/L18/L25 subcomplex. Contacts the 5S and 23S rRNAs.

Functionally, this is one of the proteins that bind and probably mediate the attachment of the 5S RNA into the large ribosomal subunit, where it forms part of the central protuberance. This chain is Large ribosomal subunit protein uL18, found in Myxococcus xanthus (strain DK1622).